A 736-amino-acid polypeptide reads, in one-letter code: Centrosomal protein kizuna (736 aa).

Residues 10 to 35 (HRAMKLQRNLRHCEGKRLELERELFQ) are a coiled coil. Positions 192-208 (NTSFQLSQKMPVTSVAS) are enriched in polar residues. 4 disordered regions span residues 192 to 238 (NTSF…SAQL), 279 to 305 (SFTH…DKHS), 323 to 348 (EDKQ…SYPP), and 642 to 690 (TVEE…NMST). The segment covering 210-219 (EDGRTHRAQI) has biased composition (basic and acidic residues). Positions 328–339 (LDSSSDLTVSIS) are enriched in polar residues. Low complexity predominate over residues 658-668 (SETSFSSSEKS). Residues 678-690 (IQPNYMKSNNMST) show a composition bias toward polar residues.

The protein belongs to the kizuna family.

Its subcellular location is the cytoplasm. The protein localises to the cytoskeleton. The protein resides in the microtubule organizing center. It is found in the centrosome. It localises to the cilium basal body. Its function is as follows. Centrosomal protein required for establishing a robust mitotic centrosome architecture that can endure the forces that converge on the centrosomes during spindle formation. Required for stabilizing the expanded pericentriolar material around the centriole. The protein is Centrosomal protein kizuna (kiz) of Xenopus laevis (African clawed frog).